Here is a 131-residue protein sequence, read N- to C-terminus: MNSKAMQALIFLGFLATSCLAQAPAPAPTTVTPPPTALPPVTAETPSPIASPPVPVNEPTPAPTTSPTTSPVASPPQTDAPAPGPSAGLTPTSSPAPGPDGAADAPSAAWANKAFLVGTAVAGALYAVVLA.

An N-terminal signal peptide occupies residues 1–21 (MNSKAMQALIFLGFLATSCLA). Gln22 is subject to Pyrrolidone carboxylic acid. A 4-hydroxyproline mark is found at Pro24, Pro26, Pro28, Pro34, and Pro35. O-linked (Ara...) hydroxyproline glycosylation is found at Pro24, Pro26, Pro28, Pro34, and Pro35. The segment at 24–106 (PAPAPTTVTP…PGPDGAADAP (83 aa)) is disordered. 2 stretches are compositionally biased toward pro residues: residues 25–38 (APAPTTVTPPPTAL) and 49–64 (IASPPVPVNEPTPAPT). Low complexity-rich tracts occupy residues 65–76 (TSPTTSPVASPP) and 90–106 (TPTSSPAPGPDGAADAP). Ser107 carries the GPI-anchor amidated serine lipid modification. Residues 108–131 (AAWANKAFLVGTAVAGALYAVVLA) constitute a propeptide, removed in mature form.

The protein belongs to the classical AGP family. In terms of processing, O-glycosylated on hydroxyprolines; noncontiguous hydroxylproline residues are glycosylated with arabinogalactan.

The protein resides in the cell membrane. In terms of biological role, proteoglycan that seems to be implicated in diverse developmental roles such as differentiation, cell-cell recognition, embryogenesis and programmed cell death. The polypeptide is Classical arabinogalactan protein 2 (AGP2) (Arabidopsis thaliana (Mouse-ear cress)).